A 229-amino-acid chain; its full sequence is NAD-dependent protein deacetylase (229 aa).

The Deacetylase sirtuin-type domain maps to 1-229 (MNNLKEAIKQ…NDAVKVFAEI (229 aa)). 10 residues coordinate NAD(+): A20, R32, Q96, I98, D99, H114, T181, S182, N205, and V223. The nicotinamide site is built by I98 and D99. H114 (proton acceptor) is an active-site residue.

Belongs to the sirtuin family. Class U subfamily.

It localises to the cytoplasm. It catalyses the reaction N(6)-acetyl-L-lysyl-[protein] + NAD(+) + H2O = 2''-O-acetyl-ADP-D-ribose + nicotinamide + L-lysyl-[protein]. NAD-dependent protein deacetylase which modulates the activities of several enzymes which are inactive in their acetylated form. In Listeria innocua serovar 6a (strain ATCC BAA-680 / CLIP 11262), this protein is NAD-dependent protein deacetylase.